A 635-amino-acid chain; its full sequence is Threonine--tRNA ligase (635 aa).

Residues 1–58 form the TGS domain; that stretch reads MIQVTCDQKNYEVLEGTTAAELAKQLKNSHQFIGVLINERPRDLSTHLNEGDTLVFLT. Residues 237-528 are catalytic; sequence DHRVLGAKLD…LIENFKGRFP (292 aa). Residues Cys-328, His-379, and His-505 each contribute to the Zn(2+) site.

This sequence belongs to the class-II aminoacyl-tRNA synthetase family. In terms of assembly, homodimer. It depends on Zn(2+) as a cofactor.

It is found in the cytoplasm. It catalyses the reaction tRNA(Thr) + L-threonine + ATP = L-threonyl-tRNA(Thr) + AMP + diphosphate + H(+). Its function is as follows. Catalyzes the attachment of threonine to tRNA(Thr) in a two-step reaction: L-threonine is first activated by ATP to form Thr-AMP and then transferred to the acceptor end of tRNA(Thr). Also edits incorrectly charged L-seryl-tRNA(Thr). In Chlamydia pneumoniae (Chlamydophila pneumoniae), this protein is Threonine--tRNA ligase.